We begin with the raw amino-acid sequence, 790 residues long: MLVPLSLLQKFFSSPLSIEEILQACDRIGIEAECSNVFPDSLNTVVTGKILSASPHPDAERLTVAIVFDGKGERQIICGAPNCRAGIIVPIALPGAKLRNASGEITTIKKAKIRGLESQGMCCGADELGFPHLQKAERGIFEFPADTPLGESACMLLAGAPLECSLTPNLGHCASLLGLAREISFLSPVSLNIPEEFSFASLPQETSICDMHDAGACPVFYSVKISGLSCRRSPEYLQAALTALGQKPLNAIVDITNYVMLSLGQPLHAYDSQAVEQKSLHAATLQSAQPLTLLNQETYTLPAGSLVVADQHNILGLAGVMGSAASSCSENTTEIILEAAYFQPQAVRKYQRTIQLHTEAAYRFTRGVDPQGVLPVLHAAIHMIQSLFPDAQISPIQKIGDDSFSPLSLSVRPKTIKRLLDIELSTAEIVAKLSSLGFQTAVEEQAVRVEVPSYRHDIQEETDLVEEICRTTPFVQKTQKILPTYTPIYSLKRELTAFLANGGLQQFFTYSLLDTEVSSLSLQESSLIPVQNSSWKLRDSLLPGMLKSAATNLHRQAPYVYAFEIGNVYSKEQNRYQEEERVAILLSRQVMDDSWQGKTPLSFYTIKGWVEKLLCQSGASIEDFSLQPSQHPNFHPYQQAALYQKKHLLGIFGTLHPQLCRKAQIKHDVVFAELSLNVLLSLKKKSGPHYVPYPIYPASSRDITITIDRDLPADLVRRELLSFESKWLESVHIVSVYQGRDSASQSKNVSLRMVFRDHERTLSGQEIEEEYERLTALLDKKLANIGQGNS.

The tRNA-binding domain occupies 39-154; it reads PDSLNTVVTG…ADTPLGESAC (116 aa). One can recognise a B5 domain in the interval 404-483; the sequence is FSPLSLSVRP…FVQKTQKILP (80 aa). Mg(2+)-binding residues include Asp457, Asp463, Glu466, and Glu467. One can recognise an FDX-ACB domain in the interval 694-790; sequence PIYPASSRDI…KLANIGQGNS (97 aa).

Belongs to the phenylalanyl-tRNA synthetase beta subunit family. Type 1 subfamily. Tetramer of two alpha and two beta subunits. Mg(2+) serves as cofactor.

It is found in the cytoplasm. The catalysed reaction is tRNA(Phe) + L-phenylalanine + ATP = L-phenylalanyl-tRNA(Phe) + AMP + diphosphate + H(+). The sequence is that of Phenylalanine--tRNA ligase beta subunit (pheT) from Chlamydia trachomatis serovar D (strain ATCC VR-885 / DSM 19411 / UW-3/Cx).